A 413-amino-acid chain; its full sequence is Serine hydroxymethyltransferase (413 aa).

Residues Leu-119 and 123 to 125 (GHL) each bind (6S)-5,6,7,8-tetrahydrofolate. Lys-228 carries the N6-(pyridoxal phosphate)lysine modification. 351 to 353 (SPF) is a binding site for (6S)-5,6,7,8-tetrahydrofolate.

Belongs to the SHMT family. In terms of assembly, homodimer. Requires pyridoxal 5'-phosphate as cofactor.

It is found in the cytoplasm. It catalyses the reaction (6R)-5,10-methylene-5,6,7,8-tetrahydrofolate + glycine + H2O = (6S)-5,6,7,8-tetrahydrofolate + L-serine. The protein operates within one-carbon metabolism; tetrahydrofolate interconversion. Its pathway is amino-acid biosynthesis; glycine biosynthesis; glycine from L-serine: step 1/1. Functionally, catalyzes the reversible interconversion of serine and glycine with tetrahydrofolate (THF) serving as the one-carbon carrier. This reaction serves as the major source of one-carbon groups required for the biosynthesis of purines, thymidylate, methionine, and other important biomolecules. Also exhibits THF-independent aldolase activity toward beta-hydroxyamino acids, producing glycine and aldehydes, via a retro-aldol mechanism. The protein is Serine hydroxymethyltransferase of Clostridium botulinum (strain Okra / Type B1).